A 325-amino-acid chain; its full sequence is uncharacterized protein (325 aa).

It belongs to the mgp1/MG371 family.

This is an uncharacterized protein from Mycoplasma pneumoniae (strain ATCC 29342 / M129 / Subtype 1) (Mycoplasmoides pneumoniae).